Reading from the N-terminus, the 539-residue chain is Chaperonin GroEL (539 aa).

ATP-binding positions include T29–P32, D86–T90, G413, N477–A479, and D493.

The protein belongs to the chaperonin (HSP60) family. Forms a cylinder of 14 subunits composed of two heptameric rings stacked back-to-back. Interacts with the co-chaperonin GroES.

It is found in the cytoplasm. The catalysed reaction is ATP + H2O + a folded polypeptide = ADP + phosphate + an unfolded polypeptide.. Functionally, together with its co-chaperonin GroES, plays an essential role in assisting protein folding. The GroEL-GroES system forms a nano-cage that allows encapsulation of the non-native substrate proteins and provides a physical environment optimized to promote and accelerate protein folding. The polypeptide is Chaperonin GroEL (Leifsonia xyli subsp. xyli (strain CTCB07)).